A 349-amino-acid chain; its full sequence is MSNLSGKVQTVLGPVDPEQLGKTLTHEHLTMSFECCYHPPPAGDEAVAESPFQMQHMYWLRQNPYSCHENLLLLQETLAVREELLAYRKAGGGAVVENTTTGIQRDLPTLRQLSKDTGVHIIAGAGYYVDCTHTEDTRRMSVEKLSDVIVSEVLHGADGTDIRCGVIGEIGTCWPITDSERKVLKATAHAQSQLGCPVIIHPGRNPAAPAEVVRILQEAGGDISKTVMSHLDRTIFDEGELLEFAKLGSYLEYDLFGMEMLNYPYNSEVDMPSDSQRVKALAFLVKEGYEDKIVVAHDIHTKNRLTKFGGHGYSHILKNIVPKMLRRGISQRQVDKILVDNPKEWLTFK.

A divalent metal cation is bound by residues His26, His28, Glu169, His201, His230, and Asp298.

Belongs to the metallo-dependent hydrolases superfamily. Phosphotriesterase family. It depends on a divalent metal cation as a cofactor.

It localises to the cytoplasm. The protein localises to the cytosol. It catalyses the reaction N-acetyltaurine + H2O = taurine + acetate. The enzyme catalyses N-propanoyltaurine + H2O = propanoate + taurine. It carries out the reaction N-acetyl-L-methionine + H2O = L-methionine + acetate. The catalysed reaction is N-acetyl-L-isoleucine + H2O = L-isoleucine + acetate. It catalyses the reaction N-acetyl-L-leucine + H2O = L-leucine + acetate. The enzyme catalyses N-acetyl-L-valine + H2O = L-valine + acetate. N-acetyltaurine hydrolase that catalyzes the hydrolysis of N-acetyltaurine into taurine and acetate. PTER also acts on other N-acetyl amino acids (Met, Ile, Leu, Val) and N-propionyltaurine, but at lower rates. The polypeptide is N-acetyltaurine hydrolase (pter) (Tetraodon nigroviridis (Spotted green pufferfish)).